The chain runs to 935 residues: Progesterone receptor (935 aa).

The segment at 1–50 (MTELKAKGPRAPHVAGSPSSPKVGSPLPCSQAAGPFPGSQTSDTLPEASA) is disordered. The interval 1-164 (MTELKAKGPR…PATQRVLSPL (164 aa)) is AF3; mediates transcriptional activation. Residues 1–568 (MTELKAKGPR…YSFESLPQKI (568 aa)) form a modulating, Pro-Rich region. S20 carries the post-translational modification Phosphoserine. The LXXL motif 1 signature appears at 55–59 (LDGLL). A disordered region spans residues 62-159 (RICQGQDPTD…DPPAAPATQR (98 aa)). Residue S81 is modified to Phosphoserine. Positions 115 to 119 (LDTLW) match the LXXL motif 2 motif. Phosphoserine is present on residues S130 and S162. The tract at residues 165 to 305 (MSRSGGKAGD…LATTVTDFIH (141 aa)) is mediates transcriptional transrepression. The Nuclear localization signal signature appears at 183-187 (KVLPR). The tract at residues 185–252 (LPRGLSPSRQ…ALGGAAAGGG (68 aa)) is disordered. Residue S190 is modified to Phosphoserine. Over residues 191–203 (PSRQLLLPTSGSP) the composition is skewed to polar residues. The residue at position 213 (S213) is a Phosphoserine. Positions 220–231 (EVEEEDGSESED) are enriched in acidic residues. The segment covering 232-246 (SAGPLLKGKPRALGG) has biased composition (low complexity). At S294 the chain carries Phosphoserine; by MAPK1. The segment at 331–365 (GGAGAASAFAPPRSSPSASSTPVPGGDFPDCAYAP) is disordered. Over residues 335–356 (AASAFAPPRSSPSASSTPVPGG) the composition is skewed to low complexity. Position 345 is a phosphoserine; by MAPK (S345). K388 participates in a covalent cross-link: Glycyl lysine isopeptide (Lys-Gly) (interchain with G-Cter in SUMO); alternate. K388 participates in a covalent cross-link: Glycyl lysine isopeptide (Lys-Gly) (interchain with G-Cter in ubiquitin); alternate. The residue at position 400 (S400) is a Phosphoserine; by CDK2. A disordered region spans residues 415-452 (PDFPLGPPPSLPPRAPPPRPGEAAVTAAPASASVSSAS). Over residues 418-434 (PLGPPPSLPPRAPPPRP) the composition is skewed to pro residues. Low complexity predominate over residues 435–452 (GEAAVTAAPASASVSSAS). The interval 456-548 (STLECILYKA…VYPPYLNYLR (93 aa)) is AF1; mediates transcriptional activation. Residue K533 forms a Glycyl lysine isopeptide (Lys-Gly) (interchain with G-Cter in SUMO) linkage. NR C4-type zinc fingers lie at residues 569–589 (CLIC…CGSC) and 605–629 (CAGR…LRKC). The segment at residues 569–641 (CLICGDEASG…AGMVLGGRKF (73 aa)) is a DNA-binding region (nuclear receptor). Residue S678 is modified to Phosphoserine. In terms of domain architecture, NR LBD spans 681 to 915 (QDIQLIPPLI…EFPEMMSEVI (235 aa)). The tract at residues 689–935 (LINLLLSIEP…MVKPLLFHKK (247 aa)) is AF2; mediates transcriptional activation.

Belongs to the nuclear hormone receptor family. Interacts with SMARD1 and UNC45A. Interacts with CUEDC2; the interaction promotes ubiquitination, decreases sumoylation, and represses transcriptional activity. Interacts with PIAS3; the interaction promotes sumoylation of PR in a hormone-dependent manner, inhibits DNA-binding, and alters nuclear export. Interacts with SP1; the interaction requires ligand-induced phosphorylation on Ser-344 by ERK1/2-MAPK. Interacts with PRMT2. Interacts with NCOA2 and NCOA1. Interacts with KLF9. Interacts with GTF2B. In terms of processing, phosphorylated on multiple serine sites. Several of these sites are hormone-dependent. Phosphorylation on Ser-294 is highly hormone-dependent and modulates ubiquitination and sumoylation on Lys-388. Phosphorylation on Ser-345 requires induction by hormone. Basal phosphorylation on Ser-81, Ser-162, Ser-190 and Ser-400 is increased in response to progesterone and can be phosphorylated in vitro by the CDK2-A1 complex. Increased levels of phosphorylation on Ser-400 also in the presence of EGF, heregulin, IGF, PMA and FBS. Phosphorylation at this site by CDK2 is ligand-independent, and increases nuclear translocation and transcriptional activity. Phosphorylation at Ser-162 and Ser-294, but not at Ser-190, is impaired during the G(2)/M phase of the cell cycle. Phosphorylation on Ser-345 by ERK1/2 MAPK is required for interaction with SP1. Post-translationally, sumoylation is hormone-dependent and represses transcriptional activity. Sumoylation on all three sites is enhanced by PIAS3. Desumoylated by SENP1. Sumoylation on Lys-388, the main site of sumoylation, is repressed by ubiquitination on the same site, and modulated by phosphorylation at Ser-294. Ubiquitination is hormone-dependent and represses sumoylation on the same site. Promoted by MAPK-mediated phosphorylation on Ser-294. In terms of processing, palmitoylated by ZDHHC7 and ZDHHC21. Palmitoylation is required for plasma membrane targeting and for rapid intracellular signaling via ERK and AKT kinases and cAMP generation.

The protein resides in the nucleus. It localises to the cytoplasm. Functionally, the steroid hormones and their receptors are involved in the regulation of eukaryotic gene expression and affect cellular proliferation and differentiation in target tissues. Transcriptional activator of several progesteron-dependent promoters in a variety of cell types. Involved in activation of SRC-dependent MAPK signaling on hormone stimulation. In Pithecia irrorata (Gray monk saki), this protein is Progesterone receptor (PGR).